We begin with the raw amino-acid sequence, 452 residues long: Glycine receptor subunit alpha-2 (452 aa).

The N-terminal stretch at 1–27 (MNRQLVNILTALFAFFLETNHFRTAFC) is a signal peptide. The Extracellular portion of the chain corresponds to 28–256 (KDHDSRSGKQ…KFHLERQMGY (229 aa)). An N-linked (GlcNAc...) asparagine glycan is attached at N72. R99 is a binding site for glycine. R99 contacts strychnine. An N-linked (GlcNAc...) asparagine glycan is attached at N103. S163 contributes to the glycine binding site. C172 and C186 form a disulfide bridge. E226 and E228 together coordinate Zn(2+). A disulfide bridge links C232 with C243. Position 238 (T238) interacts with glycine. H249 is a Zn(2+) binding site. The chain crosses the membrane as a helical span at residues 257–278 (YLIQMYIPSLLIVILSWVSFWI). Over 279-283 (NMDAA) the chain is Cytoplasmic. The chain crosses the membrane as a helical span at residues 284–304 (PARVALGITTVLTMTTQSSGS). The Extracellular segment spans residues 305-315 (RASLPKVSYVK). Residues 316 to 336 (AIDIWMAVCLLFVFAALLEYA) form a helical membrane-spanning segment. At 337–420 (AVNFVSRQHK…FVDRAKRIDT (84 aa)) the chain is on the cytoplasmic side. A helical membrane pass occupies residues 421–441 (ISRAAFPLAFLIFNIFYWITY). At 442–452 (KIIRHEDVHKK) the chain is on the extracellular side.

The protein belongs to the ligand-gated ion channel (TC 1.A.9) family. Glycine receptor (TC 1.A.9.3) subfamily. GLRA2 sub-subfamily. Interacts with GLRB. Heteropentamer composed of GLRA2 and GLRB. Functional GLRB-GLRA2 heteropentamers contain four GLRA2 subunits and one GLRB subunit, although alternative subunit composition cannot be excluded. Homopentamer (in vitro). Both homopentamers and heteropentamers form functional ion channels, but their characteristics are subtly different.

It localises to the postsynaptic cell membrane. Its subcellular location is the synapse. The protein resides in the cell membrane. The protein localises to the cell projection. It catalyses the reaction chloride(in) = chloride(out). Channel opening is triggered by extracellular glycine. Channel opening is also triggered by taurine and beta-alanine. Inhibited by strychnine. Inhibited by picrotoxin. Channel activity is potentiated by 10-100 uM Zn(2+). Channel activity is marginally increased by 50 mM ethanol; it is strongly increased by a combination of 0.5 uM Zn(2+) and 50 mM ethanol. Channel activity is inhibited by 100-1000 uM Zn(2+). Functionally, subunit of heteromeric glycine-gated chloride channels. Plays a role in synaptic plasticity. Contributes to the generation of inhibitory postsynaptic currents, and is involved in the down-regulation of neuronal excitability. Plays a role in cellular responses to ethanol. In Homo sapiens (Human), this protein is Glycine receptor subunit alpha-2.